The chain runs to 326 residues: Phospho-N-acetylmuramoyl-pentapeptide-transferase (326 aa).

The next 10 membrane-spanning stretches (helical) occupy residues 13–33 (ILAP…IFIP), 57–77 (GTPT…ILIM), 85–105 (EMIL…DDIL), 121–141 (MILL…NVGT), 155–175 (NLGI…TNAV), 181–201 (IDGL…IIGF), 208–228 (VAVF…FNAF), 232–252 (IFMG…IALM), 257–277 (LFVI…IIQV), and 305–325 (VKIV…GFVA).

This sequence belongs to the glycosyltransferase 4 family. MraY subfamily. Mg(2+) serves as cofactor.

Its subcellular location is the cell membrane. It carries out the reaction UDP-N-acetyl-alpha-D-muramoyl-L-alanyl-gamma-D-glutamyl-meso-2,6-diaminopimeloyl-D-alanyl-D-alanine + di-trans,octa-cis-undecaprenyl phosphate = di-trans,octa-cis-undecaprenyl diphospho-N-acetyl-alpha-D-muramoyl-L-alanyl-D-glutamyl-meso-2,6-diaminopimeloyl-D-alanyl-D-alanine + UMP. The protein operates within cell wall biogenesis; peptidoglycan biosynthesis. Its function is as follows. Catalyzes the initial step of the lipid cycle reactions in the biosynthesis of the cell wall peptidoglycan: transfers peptidoglycan precursor phospho-MurNAc-pentapeptide from UDP-MurNAc-pentapeptide onto the lipid carrier undecaprenyl phosphate, yielding undecaprenyl-pyrophosphoryl-MurNAc-pentapeptide, known as lipid I. The polypeptide is Phospho-N-acetylmuramoyl-pentapeptide-transferase (Clostridium beijerinckii (strain ATCC 51743 / NCIMB 8052) (Clostridium acetobutylicum)).